We begin with the raw amino-acid sequence, 273 residues long: Ethanolamine ammonia-lyase small subunit (273 aa).

Residues valine 164, glutamate 185, and cysteine 214 each contribute to the adenosylcob(III)alamin site.

This sequence belongs to the EutC family. The basic unit is a heterodimer which dimerizes to form tetramers. The heterotetramers trimerize; 6 large subunits form a core ring with 6 small subunits projecting outwards. Requires adenosylcob(III)alamin as cofactor.

It localises to the bacterial microcompartment. The enzyme catalyses ethanolamine = acetaldehyde + NH4(+). It functions in the pathway amine and polyamine degradation; ethanolamine degradation. Its function is as follows. Catalyzes the deamination of various vicinal amino-alcohols to oxo compounds. Allows this organism to utilize ethanolamine as the sole source of nitrogen and carbon in the presence of external vitamin B12. The chain is Ethanolamine ammonia-lyase small subunit from Pseudomonas aeruginosa (strain UCBPP-PA14).